Reading from the N-terminus, the 284-residue chain is UDP-N-acetylenolpyruvoylglucosamine reductase (284 aa).

In terms of domain architecture, FAD-binding PCMH-type spans 12 to 174; that stretch reads KIGGRVKYLV…TRVMMSFKRE (163 aa). The active site involves arginine 153. Serine 203 (proton donor) is an active-site residue. Glutamate 274 is an active-site residue.

It belongs to the MurB family. Requires FAD as cofactor.

The protein resides in the cytoplasm. The catalysed reaction is UDP-N-acetyl-alpha-D-muramate + NADP(+) = UDP-N-acetyl-3-O-(1-carboxyvinyl)-alpha-D-glucosamine + NADPH + H(+). The protein operates within cell wall biogenesis; peptidoglycan biosynthesis. Functionally, cell wall formation. The sequence is that of UDP-N-acetylenolpyruvoylglucosamine reductase from Thermotoga petrophila (strain ATCC BAA-488 / DSM 13995 / JCM 10881 / RKU-1).